Reading from the N-terminus, the 183-residue chain is MTSQIRQNYSTEVEAAVNRLVNLHLRASYTYLSLGFFFDRDDVALEGVGHFFRELAEEKREGAERLLKLQNERGGRALFQDVQKPSQDEWGKTLEAMEAALALEKNLNQALLDLHALGSARTDPHLCDFLESHFLDKEVKLIKKMGNHLTNLRRVAGPQPAQTGVAQASLGEYLFERLTLKHD.

The Ferritin-like diiron domain occupies 7–156; sequence QNYSTEVEAA…NHLTNLRRVA (150 aa). Fe cation contacts are provided by Glu-54, Glu-57, Glu-58, Glu-61, and Glu-64.

This sequence belongs to the ferritin family. As to quaternary structure, oligomer of 24 subunits. There are two types of subunits: L (light) chain and H (heavy) chain. The major chain can be light or heavy, depending on the species and tissue type. The functional molecule forms a roughly spherical shell with a diameter of 12 nm and contains a central cavity into which the insoluble mineral iron core is deposited. Interacts with NCOA4. In terms of tissue distribution, in rat liver, the light chain is the major chain.

Its subcellular location is the cytoplasmic vesicle. It localises to the autophagosome. The protein resides in the cytoplasm. The protein localises to the autolysosome. In terms of biological role, stores iron in a soluble, non-toxic, readily available form. Important for iron homeostasis. Iron is taken up in the ferrous form and deposited as ferric hydroxides after oxidation. Also plays a role in delivery of iron to cells. Mediates iron uptake in capsule cells of the developing kidney. Delivery to lysosomes by the cargo receptor NCOA4 for autophagic degradation and release or iron. The sequence is that of Ferritin light chain 1 (Ftl1) from Rattus norvegicus (Rat).